The following is a 116-amino-acid chain: Cyclin-dependent protein kinase inhibitor SMR9 (116 aa).

The segment covering 1–22 has biased composition (basic residues); it reads MASKGKKPLRRTTTRRRKRSHF. A disordered region spans residues 1–62; that stretch reads MASKGKKPLR…PVSAESGCCT (62 aa). The segment covering 35–56 has biased composition (low complexity); the sequence is VTSTSSTSTSPTSTATPSPVSA.

Its function is as follows. Probable cyclin-dependent protein kinase (CDK) inhibitor that functions as a repressor of mitosis in the endoreduplication cell cycle. This Arabidopsis thaliana (Mouse-ear cress) protein is Cyclin-dependent protein kinase inhibitor SMR9.